We begin with the raw amino-acid sequence, 139 residues long: Large ribosomal subunit protein uL14 (139 aa).

It belongs to the universal ribosomal protein uL14 family.

This Syntrichia ruralis (Great hairy screw-moss) protein is Large ribosomal subunit protein uL14 (RPL23).